The sequence spans 333 residues: Phosphate acyltransferase (333 aa).

It belongs to the PlsX family. As to quaternary structure, homodimer. Probably interacts with PlsY.

It is found in the cytoplasm. The enzyme catalyses a fatty acyl-[ACP] + phosphate = an acyl phosphate + holo-[ACP]. It functions in the pathway lipid metabolism; phospholipid metabolism. Functionally, catalyzes the reversible formation of acyl-phosphate (acyl-PO(4)) from acyl-[acyl-carrier-protein] (acyl-ACP). This enzyme utilizes acyl-ACP as fatty acyl donor, but not acyl-CoA. The chain is Phosphate acyltransferase from Clostridium botulinum (strain Alaska E43 / Type E3).